The primary structure comprises 573 residues: Estrogen receptor beta (573 aa).

The tract at residues 15–170 (QEVDSSKVGE…CFAGKGDMHF (156 aa)) is modulating. NR C4-type zinc fingers lie at residues 171-191 (CAVC…CEGC) and 207-231 (CPAT…LRKC). Residues 171–236 (CAVCHDYASG…RLRKCYEVGM (66 aa)) constitute a DNA-binding region (nuclear receptor). An NR LBD domain is found at 291–527 (TPEQLINRII…DLLLEMLDAN (237 aa)). Low complexity-rich tracts occupy residues 534-552 (MSAS…AQSQ) and 559-573 (CSGE…SSTI). The interval 534–573 (MSASYSSQPSPWSQAAQSQPGPPPSCSGECPCPPKESSTI) is disordered.

It belongs to the nuclear hormone receptor family. NR3 subfamily. Binds DNA as a homodimer. Can form a heterodimer with ER-alpha. In terms of tissue distribution, liver.

It localises to the nucleus. Binds estrogens with an affinity similar to that of ER-alpha, and activates expression of reporter genes containing estrogen response elements (ERE) in an estrogen-dependent manner. This chain is Estrogen receptor beta (esr2), found in Anguilla japonica (Japanese eel).